Reading from the N-terminus, the 352-residue chain is Molybdenum import ATP-binding protein ModC (352 aa).

The ABC transporter domain occupies 1 to 229; that stretch reads MLELNFSQTL…SVMNPWLPKE (229 aa). ATP is bound at residue 31-38; that stretch reads GVSGAGKT. The Mop domain maps to 289 to 352; it reads QTSIRNVLRA…AQIKSVSITA (64 aa).

It belongs to the ABC transporter superfamily. Molybdate importer (TC 3.A.1.8) family. As to quaternary structure, the complex is composed of two ATP-binding proteins (ModC), two transmembrane proteins (ModB) and a solute-binding protein (ModA).

Its subcellular location is the cell inner membrane. It carries out the reaction molybdate(out) + ATP + H2O = molybdate(in) + ADP + phosphate + H(+). Its function is as follows. Part of the ABC transporter complex ModABC involved in molybdenum import. Responsible for energy coupling to the transport system. This chain is Molybdenum import ATP-binding protein ModC, found in Escherichia coli (strain K12).